Reading from the N-terminus, the 481-residue chain is MTPALTALLCLGLSLGPRTRVQAGPFPKPTLWAEPGSVISWGSPVTIWCQGSLEAQEYQLDKEGSPEPLDRNNPLEPKNKARFSIPSMTQHHAGRYRCHYYSSAGWSEPSDPLELVMTGFYNKPTLSALPSPVVASGGNMTLRCGSQKGYHHFVLMKEGEHQLPRTLDSQQLHSGGFQALFPVGPVTPSHRWRFTCYYYYTNTPRVWSHPSDPLEILPSGVSRKPSLLTLQGPVLAPGQSLTLQCGSDVGYDRFVLYKEGERDFLQRPGQQPQAGLSQANFTLGPVSPSHGGQYRCYGAHNLSSEWSAPSDPLNILMAGQIYDTVSLSAQPGPTVASGENVTLLCQSRGYFDTFLLTKEGAAHPPLRLRSMYGAHKYQAEFPMSPVTSAHAGTYRCYGSYSSNPHLLSFPSEPLELMVSGHSGGSSLPPTGPPSTPASHAKDYTVENLIRMGMAGLVLVFLGILLFEAQHSQRNPQDAAGR.

A signal peptide spans 1 to 23; that stretch reads MTPALTALLCLGLSLGPRTRVQA. Over 24–447 the chain is Extracellular; that stretch reads GPFPKPTLWA…SHAKDYTVEN (424 aa). Cys-49 and Cys-98 form a disulfide bridge. Basic and acidic residues predominate over residues 59 to 70; that stretch reads QLDKEGSPEPLD. The segment at 59–78 is disordered; it reads QLDKEGSPEPLDRNNPLEPK. An N-linked (GlcNAc...) asparagine glycan is attached at Asn-139. Disulfide bonds link Cys-144–Cys-196 and Cys-245–Cys-296. 2 consecutive Ig-like C2-type domains span residues 225-314 and 323-408; these read PSLL…DPLN and DTVS…HLLS. Residues Asn-301 and Asn-340 are each glycosylated (N-linked (GlcNAc...) asparagine). Cys-345 and Cys-396 form a disulfide bridge. A disordered region spans residues 419 to 439; it reads SGHSGGSSLPPTGPPSTPASH. Residues 448–468 traverse the membrane as a helical segment; the sequence is LIRMGMAGLVLVFLGILLFEA. Over 469–481 the chain is Cytoplasmic; the sequence is QHSQRNPQDAAGR.

Its subcellular location is the membrane. Its function is as follows. May act as receptor for class I MHC antigens. This Homo sapiens (Human) protein is Leukocyte immunoglobulin-like receptor subfamily A member 6 (LILRA6).